The chain runs to 513 residues: Bifunctional purine biosynthesis protein PurH (513 aa).

One can recognise an MGS-like domain in the interval 1–147 (MIQIKRALVS…KNHKNVVVLT (147 aa)).

This sequence belongs to the PurH family.

The catalysed reaction is (6R)-10-formyltetrahydrofolate + 5-amino-1-(5-phospho-beta-D-ribosyl)imidazole-4-carboxamide = 5-formamido-1-(5-phospho-D-ribosyl)imidazole-4-carboxamide + (6S)-5,6,7,8-tetrahydrofolate. It catalyses the reaction IMP + H2O = 5-formamido-1-(5-phospho-D-ribosyl)imidazole-4-carboxamide. Its pathway is purine metabolism; IMP biosynthesis via de novo pathway; 5-formamido-1-(5-phospho-D-ribosyl)imidazole-4-carboxamide from 5-amino-1-(5-phospho-D-ribosyl)imidazole-4-carboxamide (10-formyl THF route): step 1/1. It functions in the pathway purine metabolism; IMP biosynthesis via de novo pathway; IMP from 5-formamido-1-(5-phospho-D-ribosyl)imidazole-4-carboxamide: step 1/1. In Leptospira biflexa serovar Patoc (strain Patoc 1 / Ames), this protein is Bifunctional purine biosynthesis protein PurH.